The chain runs to 509 residues: Glutamate--tRNA ligase (509 aa).

The 'HIGH' region motif lies at 20-30; that stretch reads PSPTGFPHVGT. Residues Cys117, Cys119, Cys144, and His146 each coordinate Zn(2+). A 'KMSKS' region motif is present at residues 261 to 265; that stretch reads KLSKR. Lys264 is a binding site for ATP.

It belongs to the class-I aminoacyl-tRNA synthetase family. Glutamate--tRNA ligase type 1 subfamily. In terms of assembly, monomer. Zn(2+) is required as a cofactor.

Its subcellular location is the cytoplasm. The enzyme catalyses tRNA(Glu) + L-glutamate + ATP = L-glutamyl-tRNA(Glu) + AMP + diphosphate. Catalyzes the attachment of glutamate to tRNA(Glu) in a two-step reaction: glutamate is first activated by ATP to form Glu-AMP and then transferred to the acceptor end of tRNA(Glu). This chain is Glutamate--tRNA ligase, found in Psychrobacter cryohalolentis (strain ATCC BAA-1226 / DSM 17306 / VKM B-2378 / K5).